The chain runs to 86 residues: Putative membrane protein insertion efficiency factor (86 aa).

This sequence belongs to the UPF0161 family.

Its subcellular location is the cell inner membrane. Functionally, could be involved in insertion of integral membrane proteins into the membrane. The protein is Putative membrane protein insertion efficiency factor of Haemophilus influenzae (strain 86-028NP).